A 307-amino-acid polypeptide reads, in one-letter code: MTLLQNADLMTAIVTPFDDEENIDYGRLEYLTNYLIEHGSNGFVIGGTTGETPELTHDEKIELYQHFGEIVNGRVPVIAGTGSNNTKETIAFTNEVAQINGIDYALVVVPPYNKPNQRGMVAHFTAVADSVDLPIIIYNIPGRTGVKMAQETVVELSHHQNIAAVKQCTSLEELEYIVEHRDPDFAVFTGEDAQALTARVLGANGVISVASHTYVDQMRQMYDSLYRGDYQTAGKLQRWLTPRMAALFMFPSPSPVKAVLNAQGFNVGSCRLPILPLNEEEKRKLETALSLPTNSLTAKNLPLNLGE.

Residue Thr-49 coordinates pyruvate. The Proton donor/acceptor role is filled by Tyr-138. Lys-166 serves as the catalytic Schiff-base intermediate with substrate. Ile-207 contributes to the pyruvate binding site.

It belongs to the DapA family. In terms of assembly, homotetramer; dimer of dimers.

It is found in the cytoplasm. It catalyses the reaction L-aspartate 4-semialdehyde + pyruvate = (2S,4S)-4-hydroxy-2,3,4,5-tetrahydrodipicolinate + H2O + H(+). Its pathway is amino-acid biosynthesis; L-lysine biosynthesis via DAP pathway; (S)-tetrahydrodipicolinate from L-aspartate: step 3/4. Its function is as follows. Catalyzes the condensation of (S)-aspartate-beta-semialdehyde [(S)-ASA] and pyruvate to 4-hydroxy-tetrahydrodipicolinate (HTPA). The chain is 4-hydroxy-tetrahydrodipicolinate synthase from Limosilactobacillus reuteri (strain DSM 20016) (Lactobacillus reuteri).